Reading from the N-terminus, the 1148-residue chain is Putative ATP-dependent RNA helicase rha-2 (1148 aa).

Residues 1–10 (MGKRKTKEDN) show a composition bias toward basic and acidic residues. Disordered regions lie at residues 1 to 51 (MGKR…FAKE) and 101 to 163 (STKL…DAGN). Over residues 138–160 (PTDDESSSEEEEEEEEGDNDIED) the composition is skewed to acidic residues. In terms of domain architecture, Helicase ATP-binding spans 246-412 (VEAINENLVT…KLFPLLTPKV (167 aa)). 259–266 (GETGSGKT) contacts ATP. Residues 355-358 (DEAH) carry the DEAH box motif. The region spanning 463–703 (EVKQLITKLK…QLVLHLKSMN (241 aa)) is the Helicase C-terminal domain.

Belongs to the DEAD box helicase family. DEAH subfamily.

It carries out the reaction ATP + H2O = ADP + phosphate + H(+). Probable ATP-binding RNA helicase. This is Putative ATP-dependent RNA helicase rha-2 (rha-2) from Caenorhabditis elegans.